A 306-amino-acid polypeptide reads, in one-letter code: Phosphatidate cytidylyltransferase (306 aa).

Positions 1–28 (MTTNDAGTGNPAEQPARGAKQQPATETS) are disordered. A run of 8 helical transmembrane segments spans residues 36–56 (AAIVVGLSIGLVLIAVLVFVP), 82–102 (GYLIPVIPLLIGGQAAVWLTW), 103–123 (PFGAVGALAGFGGMVVVCMIW), 151–171 (ATVFLAVWVPLFCSFGAMLVY), 180–200 (FCMMIAVIASDVGGYAVGVLF), 218–238 (FAGSLVCGITATIITATFLVG), 241–261 (PWIGALLGVLFVLTTALGDLV), and 285–305 (MDRLDGILPSAVAAWIVLTLL).

It belongs to the CDS family.

The protein localises to the cell membrane. It carries out the reaction a 1,2-diacyl-sn-glycero-3-phosphate + CTP + H(+) = a CDP-1,2-diacyl-sn-glycerol + diphosphate. It functions in the pathway phospholipid metabolism; CDP-diacylglycerol biosynthesis; CDP-diacylglycerol from sn-glycerol 3-phosphate: step 3/3. The protein is Phosphatidate cytidylyltransferase (cdsA) of Mycobacterium bovis (strain ATCC BAA-935 / AF2122/97).